Reading from the N-terminus, the 163-residue chain is uncharacterized protein (163 aa).

This is an uncharacterized protein from Homo sapiens (Human).